A 149-amino-acid chain; its full sequence is Transcriptional regulator MraZ (149 aa).

SpoVT-AbrB domains lie at 5 to 52 (ITTL…PLPE) and 81 to 124 (AEEC…DSMV).

This sequence belongs to the MraZ family. Forms oligomers.

Its subcellular location is the cytoplasm. The protein localises to the nucleoid. The sequence is that of Transcriptional regulator MraZ from Nitrosococcus oceani (strain ATCC 19707 / BCRC 17464 / JCM 30415 / NCIMB 11848 / C-107).